A 187-amino-acid polypeptide reads, in one-letter code: Putative AgrB-like protein 1 (187 aa).

5 helical membrane-spanning segments follow: residues valine 29–isoleucine 49, leucine 50–isoleucine 70, cysteine 81–phenylalanine 98, leucine 103–lysine 120, and isoleucine 149–tryptophan 169.

The protein belongs to the AgrB family.

The protein resides in the cell membrane. In terms of biological role, may be involved in the proteolytic processing of a quorum sensing system signal molecule precursor. The sequence is that of Putative AgrB-like protein 1 from Clostridium perfringens (strain 13 / Type A).